The primary structure comprises 78 residues: Short neurotoxin SNTX26 (78 aa).

The first 21 residues, 1-21, serve as a signal peptide directing secretion; the sequence is MKTLLLTFLVVTIVCLDLGYT. 4 disulfides stabilise this stretch: Cys24-Cys40, Cys33-Cys58, Cys62-Cys70, and Cys71-Cys76.

It belongs to the three-finger toxin family. Short-chain subfamily. As to expression, expressed by the venom gland.

The protein resides in the secreted. In terms of biological role, this three-finger toxin binds and inhibits the nicotinic acetylcholine receptor (nAChR). This is Short neurotoxin SNTX26 from Ophiophagus hannah (King cobra).